We begin with the raw amino-acid sequence, 254 residues long: Thiazole synthase (254 aa).

Residue Lys95 is the Schiff-base intermediate with DXP of the active site. 1-deoxy-D-xylulose 5-phosphate contacts are provided by residues Gly156, 182-183 (AG), and 204-205 (NT).

This sequence belongs to the ThiG family. As to quaternary structure, homotetramer. Forms heterodimers with either ThiH or ThiS.

It localises to the cytoplasm. The enzyme catalyses [ThiS sulfur-carrier protein]-C-terminal-Gly-aminoethanethioate + 2-iminoacetate + 1-deoxy-D-xylulose 5-phosphate = [ThiS sulfur-carrier protein]-C-terminal Gly-Gly + 2-[(2R,5Z)-2-carboxy-4-methylthiazol-5(2H)-ylidene]ethyl phosphate + 2 H2O + H(+). It functions in the pathway cofactor biosynthesis; thiamine diphosphate biosynthesis. Functionally, catalyzes the rearrangement of 1-deoxy-D-xylulose 5-phosphate (DXP) to produce the thiazole phosphate moiety of thiamine. Sulfur is provided by the thiocarboxylate moiety of the carrier protein ThiS. In vitro, sulfur can be provided by H(2)S. This is Thiazole synthase from Shewanella oneidensis (strain ATCC 700550 / JCM 31522 / CIP 106686 / LMG 19005 / NCIMB 14063 / MR-1).